The following is a 270-amino-acid chain: uncharacterized protein (270 aa).

Residues 1–10 (MFGLKVKDAT) show a composition bias toward basic and acidic residues. Disordered regions lie at residues 1–115 (MFGL…PTPW) and 215–236 (QTGF…QGEQ). Low complexity-rich tracts occupy residues 26-41 (SSSS…TQRG) and 98-113 (GTSP…GTPT).

It belongs to the adhesin P1 family.

This is an uncharacterized protein from Mycoplasma pneumoniae (strain ATCC 29342 / M129 / Subtype 1) (Mycoplasmoides pneumoniae).